The following is a 121-amino-acid chain: Glycine cleavage system H protein (121 aa).

One can recognise a Lipoyl-binding domain in the interval 22-102 (IAWVGITKYA…DSSVWLFKAE (81 aa)). The residue at position 63 (lysine 63) is an N6-lipoyllysine.

The protein belongs to the GcvH family. The glycine cleavage system is composed of four proteins: P, T, L and H. (R)-lipoate is required as a cofactor.

Functionally, the glycine cleavage system catalyzes the degradation of glycine. The H protein shuttles the methylamine group of glycine from the P protein to the T protein. This chain is Glycine cleavage system H protein, found in Tropheryma whipplei (strain TW08/27) (Whipple's bacillus).